The sequence spans 356 residues: Anthranilate phosphoribosyltransferase (356 aa).

5-phospho-alpha-D-ribose 1-diphosphate-binding positions include glycine 96, 99-100, threonine 104, 106-109, 124-132, and serine 136; these read GD, NIST, and KHGNRSASG. Glycine 96 lines the anthranilate pocket. Serine 108 provides a ligand contact to Mg(2+). Asparagine 127 contacts anthranilate. Arginine 182 contributes to the anthranilate binding site. Aspartate 241 and glutamate 242 together coordinate Mg(2+).

Belongs to the anthranilate phosphoribosyltransferase family. In terms of assembly, homodimer. Requires Mg(2+) as cofactor.

It catalyses the reaction N-(5-phospho-beta-D-ribosyl)anthranilate + diphosphate = 5-phospho-alpha-D-ribose 1-diphosphate + anthranilate. Its pathway is amino-acid biosynthesis; L-tryptophan biosynthesis; L-tryptophan from chorismate: step 2/5. Its function is as follows. Catalyzes the transfer of the phosphoribosyl group of 5-phosphorylribose-1-pyrophosphate (PRPP) to anthranilate to yield N-(5'-phosphoribosyl)-anthranilate (PRA). This chain is Anthranilate phosphoribosyltransferase, found in Trichodesmium erythraeum (strain IMS101).